Reading from the N-terminus, the 2446-residue chain is Transcription factor HIVEP2 (2446 aa).

Residues 1–93 (MDTGDTALGQ…YPPHRPSPYS (93 aa)) form a disordered region. The segment covering 17-28 (GETDKASGRWRQ) has biased composition (basic and acidic residues). 2 consecutive C2H2-type zinc fingers follow at residues 189-211 (YICP…IRSH) and 217-239 (YPCI…RKSH). Disordered regions lie at residues 272–303 (HSDG…PIPL), 340–416 (ESSQ…PPNT), 543–563 (SNSV…LRGS), and 751–985 (SHGH…SFER). Composition is skewed to polar residues over residues 381 to 416 (SEPS…PPNT) and 543 to 556 (SNSV…NLTI). Residues 751-760 (SHGHTERFDP) show a composition bias toward basic and acidic residues. Residues 766–777 (QPGSPSLVSEES) show a composition bias toward polar residues. A compositionally biased stretch (basic and acidic residues) spans 782 to 791 (DSDKMSDLGG). The span at 800-812 (SVIQHTNSLSRPN) shows a compositional bias: polar residues. At serine 819 the chain carries Phosphoserine. Residues 863–878 (PSPSQQVQQQSYHTQP) show a composition bias toward low complexity. Basic and acidic residues predominate over residues 892–916 (RVTEEPDKPEKEKEAQSKEPEKPVE). The short motif at 937-943 (PKKKRLR) is the Nuclear localization signal element. A phosphoserine mark is found at serine 950, serine 955, serine 1048, serine 1443, and serine 1447. Low complexity predominate over residues 952-982 (GESSFESTGTGLSRSPSQESNLSHSSSFSMS). The disordered stretch occupies residues 1485 to 1603 (KDLSRPQKPQ…LEEEGKGHKR (119 aa)). Composition is skewed to low complexity over residues 1510-1533 (SGSS…SPSS) and 1576-1586 (SDMSMSPQSSS). 2 C2H2-type zinc fingers span residues 1799 to 1821 (YICE…IRTH) and 1827 to 1851 (YVCK…SKAH). Disordered regions lie at residues 1882 to 1951 (AAEK…VNVG) and 2024 to 2129 (EECM…RRDL). Acidic residues predominate over residues 1899–1925 (DAEESDGEDGDDNDDDDEDEDDFDDQG). The span at 2029–2053 (PSEPSSSPRDFSPSSHHSSPGYDSS) shows a compositional bias: low complexity. 10 repeat units span residues 2053–2056 (SPCR), 2059–2062 (SPKR), 2071–2074 (SPRR), 2083–2086 (SPMR), 2089–2092 (SPRK), 2106–2109 (SPRR), 2112–2115 (SPRR), 2118–2121 (SPGK), 2130–2133 (SPRR), and 2145–2148 (SPRR). The interval 2053–2148 (SPCRDNSPKR…TTIRAPSPRR (96 aa)) is 10 X 4 AA tandem repeats of S-P-[RGMKC]-[RK]. A compositionally biased stretch (basic and acidic residues) spans 2078 to 2107 (PRRDLSPMRHLSPRKEAALRREMSQRDVSP). Residue serine 2118 is modified to Phosphoserine. Disordered stretches follow at residues 2242 to 2325 (PALS…QEEN), 2371 to 2403 (HFSR…SQTP), and 2423 to 2446 (HSSK…SQLH). Serine 2297 and serine 2301 each carry phosphoserine. Positions 2307–2317 (KQSTSEDSLNA) are enriched in polar residues. Residues 2387–2396 (PDLHDGEKDN) show a composition bias toward basic and acidic residues. Phosphoserine is present on residues serine 2429 and serine 2431. The segment covering 2433-2446 (EESKDPSSEKSQLH) has biased composition (basic and acidic residues).

Interacts with TCF4. Expressed in brain and skeletal muscle.

The protein localises to the nucleus. In terms of biological role, this protein specifically binds to the DNA sequence 5'-GGGACTTTCC-3' which is found in the enhancer elements of numerous viral promoters such as those of SV40, CMV, or HIV1. In addition, related sequences are found in the enhancer elements of a number of cellular promoters, including those of the class I MHC, interleukin-2 receptor, somatostatin receptor II, and interferon-beta genes. It may act in T-cell activation. In Homo sapiens (Human), this protein is Transcription factor HIVEP2 (HIVEP2).